Reading from the N-terminus, the 400-residue chain is Tryptophan--tRNA ligase (400 aa).

The short motif at 12-20 (PTGALHLGH) is the 'HIGH' region element. The tract at residues 173–241 (REPGFEQKAL…RLFGYLEGAR (69 aa)) is insert. The 'KMSKS' region motif lies at 265–269 (KMSKS). An ATP-binding site is contributed by K268. Positions 280 to 305 (KASVEKKVRTMPTDPARVRRTDPGDP) are disordered. A compositionally biased stretch (basic and acidic residues) spans 295 to 304 (ARVRRTDPGD).

The protein belongs to the class-I aminoacyl-tRNA synthetase family. As to quaternary structure, homodimer.

It localises to the cytoplasm. It carries out the reaction tRNA(Trp) + L-tryptophan + ATP = L-tryptophyl-tRNA(Trp) + AMP + diphosphate + H(+). This Ralstonia nicotianae (strain ATCC BAA-1114 / GMI1000) (Ralstonia solanacearum) protein is Tryptophan--tRNA ligase (trpS).